The following is a 203-amino-acid chain: Outer-membrane lipoprotein LolB (203 aa).

A signal peptide spans Met-1 to Gly-18. Cys-19 is lipidated: N-palmitoyl cysteine. Cys-19 carries S-diacylglycerol cysteine lipidation.

This sequence belongs to the LolB family. Monomer.

It is found in the cell outer membrane. Functionally, plays a critical role in the incorporation of lipoproteins in the outer membrane after they are released by the LolA protein. The sequence is that of Outer-membrane lipoprotein LolB from Vibrio campbellii (strain ATCC BAA-1116).